An 88-amino-acid chain; its full sequence is Small ribosomal subunit protein bS20 (88 aa).

The protein belongs to the bacterial ribosomal protein bS20 family.

Binds directly to 16S ribosomal RNA. This Bartonella henselae (strain ATCC 49882 / DSM 28221 / CCUG 30454 / Houston 1) (Rochalimaea henselae) protein is Small ribosomal subunit protein bS20.